The sequence spans 461 residues: ATP synthase subunit beta (461 aa).

151–158 is an ATP binding site; that stretch reads GGAGVGKT.

The protein belongs to the ATPase alpha/beta chains family. In terms of assembly, F-type ATPases have 2 components, CF(1) - the catalytic core - and CF(0) - the membrane proton channel. CF(1) has five subunits: alpha(3), beta(3), gamma(1), delta(1), epsilon(1). CF(0) has three main subunits: a(1), b(2) and c(9-12). The alpha and beta chains form an alternating ring which encloses part of the gamma chain. CF(1) is attached to CF(0) by a central stalk formed by the gamma and epsilon chains, while a peripheral stalk is formed by the delta and b chains.

The protein localises to the cell inner membrane. The enzyme catalyses ATP + H2O + 4 H(+)(in) = ADP + phosphate + 5 H(+)(out). Produces ATP from ADP in the presence of a proton gradient across the membrane. The catalytic sites are hosted primarily by the beta subunits. The protein is ATP synthase subunit beta of Alteromonas mediterranea (strain DSM 17117 / CIP 110805 / LMG 28347 / Deep ecotype).